The following is a 79-amino-acid chain: uncharacterized protein (79 aa).

Positions 1 to 24 are cleaved as a signal peptide; it reads MKMNPCTVILCKSLFFFCLFQVDC. N-linked (GlcNAc...) asparagine glycosylation is present at Asn33.

The protein localises to the secreted. This is an uncharacterized protein from Saccharomyces cerevisiae (strain ATCC 204508 / S288c) (Baker's yeast).